The sequence spans 327 residues: GMP reductase (327 aa).

Residue cysteine 176 is the Thioimidate intermediate of the active site. 205 to 228 contributes to the NADP(+) binding site; that stretch reads IIADGGIRTHGDIAKSIRFGASMV.

It belongs to the IMPDH/GMPR family. GuaC type 2 subfamily.

It catalyses the reaction IMP + NH4(+) + NADP(+) = GMP + NADPH + 2 H(+). In terms of biological role, catalyzes the irreversible NADPH-dependent deamination of GMP to IMP. It functions in the conversion of nucleobase, nucleoside and nucleotide derivatives of G to A nucleotides, and in maintaining the intracellular balance of A and G nucleotides. This is GMP reductase from Streptococcus pyogenes serotype M6 (strain ATCC BAA-946 / MGAS10394).